A 492-amino-acid chain; its full sequence is Zinc finger protein 385B (492 aa).

2 consecutive Matrin-type zinc fingers follow at residues 8–44 and 143–173; these read KKLL…VKQL and ISCN…KLKA. The segment at 159–206 is disordered; sequence EAHYKGSKHAKKLKAQESPKNKQKSAVAQDSGTKTITSTSTNTTTTTT. Residues 189-206 are compositionally biased toward low complexity; it reads SGTKTITSTSTNTTTTTT. Matrin-type zinc fingers lie at residues 303–337 and 371–401; these read KKLL…LEAR and FHCE…RVAG. The disordered stretch occupies residues 388–420; it reads QHISSRRHKDRVAGKPTKPKYSPYNKQQRSSSS.

It localises to the nucleus. May play a role in p53/TP53-mediated apoptosis. The sequence is that of Zinc finger protein 385B (znf385b) from Danio rerio (Zebrafish).